The chain runs to 330 residues: Zinc finger protein Gfi-1b (330 aa).

Positions 1-20 are SNAG domain; that stretch reads MPRSFLVKSKKAHTYHQPRV. The tract at residues 1–42 is disordered; that stretch reads MPRSFLVKSKKAHTYHQPRVQEDEPLWPPALTPVPRDQAPSN. At Lys8 the chain carries N6,N6-dimethyllysine. Residues 91 to 330 form an interaction with ARIH2 region; that stretch reads GDSPLSDSPP…RHRESQHNLK (240 aa). C2H2-type zinc fingers lie at residues 163–186, 192–214, 220–242, 248–270, 276–298, and 304–327; these read YHCV…RRSH, FACD…THVH, FECR…LLIH, YPCQ…TYIH, HKCQ…SRKH, and FSCE…ESQH. The mediates interaction with GATA1 stretch occupies residues 164-330; that stretch reads HCVKCNKVFS…RHRESQHNLK (167 aa).

Component of a RCOR-GFI-KDM1A-HDAC complex. Interacts directly with RCOR1, KDM1A and HDAC2. Forms a complex with GATA1. Interacts with histone methyltransferases EHMT2 and SUV39H1. Interacts with ARIH2 (via RING-type 2). Interacts with RUNX1T1. Post-translationally, methylation at Lys-8 in the SNAG domain seems required for the recruitment of the corepressor complex. As to expression, expressed in bone marrow and fetal liver, but also detectable in fetal spleen, fetal thymus, and testes. Detected in hematopoietic stem cells, erythroblasts, and megakaryocytes. Overexpressed in bone marrow of patients with erythroleukemia and megakaryocytic leukemia as well as in their corresponding leukemic cell lines, and markedly repressed in severe aplastic anemia (SAA).

It is found in the nucleus. Functionally, essential proto-oncogenic transcriptional regulator necessary for development and differentiation of erythroid and megakaryocytic lineages. Component of a RCOR-GFI-KDM1A-HDAC complex that suppresses, via histone deacetylase (HDAC) recruitment, a number of genes implicated in multilineage blood cell development and controls hematopoietic differentiation. Transcriptional repressor or activator depending on both promoter and cell type context; represses promoter activity of SOCS1 and SOCS3 and thus, may regulate cytokine signaling pathways. Cooperates with GATA1 to repress target gene transcription, such as the apoptosis regulator BCL2L1; GFI1B silencing in leukemic cell lines markedly increase apoptosis rate. Inhibits down-regulation of MYC and MYB as well as the cyclin-dependent kinase inhibitor CDKN1A/P21WAF1 in IL6-treated myelomonocytic cells. Represses expression of GATA3 in T-cell lymphomas and inhibits GATA1-mediated transcription; as GATA1 also mediates erythroid GFI1B transcription, both GATA1 and GFI1B participate in a feedback regulatory pathway controlling the expression of GFI1B gene in erythroid cells. Suppresses GATA1-mediated stimulation of GFI1B promoter through protein interaction. Binds to gamma-satellite DNA and to its own promoter, auto-repressing its own expression. Alters histone methylation by recruiting histone methyltransferase to target genes promoters. Plays a role in heterochromatin formation. The protein is Zinc finger protein Gfi-1b (GFI1B) of Homo sapiens (Human).